The following is a 169-amino-acid chain: Biogenesis of lysosome-related organelles complex 1 subunit 4 (169 aa).

It belongs to the BLOC1S4 family. In terms of assembly, component of the biogenesis of lysosome-related organelles complex-1 (BLOC-1) composed of Blos1, Blos2, Blos3, Blos4, Dysb, Muted, Pldn and Snapin. Interacts with Pldn.

Functionally, component of the biogenesis of lysosome-related organelles complex-1 (BLOC-1) involved in pigment granule biogenesis. This Drosophila melanogaster (Fruit fly) protein is Biogenesis of lysosome-related organelles complex 1 subunit 4.